Here is a 450-residue protein sequence, read N- to C-terminus: tRNA modification GTPase MnmE (450 aa).

(6S)-5-formyl-5,6,7,8-tetrahydrofolate contacts are provided by Arg20, Glu78, and Lys117. In terms of domain architecture, TrmE-type G spans 211–372 (GFRMVIVGKP…LEEAIYRETQ (162 aa)). K(+) is bound at residue Asn221. GTP is bound by residues 221 to 226 (NVGKST), 240 to 246 (TDIPGTT), and 265 to 268 (DTAG). Ser225 lines the Mg(2+) pocket. Residues Thr240, Ile242, and Thr245 each coordinate K(+). Thr246 is a Mg(2+) binding site. Lys450 is a (6S)-5-formyl-5,6,7,8-tetrahydrofolate binding site.

The protein belongs to the TRAFAC class TrmE-Era-EngA-EngB-Septin-like GTPase superfamily. TrmE GTPase family. Homodimer. Heterotetramer of two MnmE and two MnmG subunits. K(+) serves as cofactor.

It is found in the cytoplasm. In terms of biological role, exhibits a very high intrinsic GTPase hydrolysis rate. Involved in the addition of a carboxymethylaminomethyl (cmnm) group at the wobble position (U34) of certain tRNAs, forming tRNA-cmnm(5)s(2)U34. The protein is tRNA modification GTPase MnmE of Thermotoga petrophila (strain ATCC BAA-488 / DSM 13995 / JCM 10881 / RKU-1).